We begin with the raw amino-acid sequence, 49 residues long: Large ribosomal subunit protein bL33 (49 aa).

This sequence belongs to the bacterial ribosomal protein bL33 family.

This Nitratidesulfovibrio vulgaris (strain ATCC 29579 / DSM 644 / CCUG 34227 / NCIMB 8303 / VKM B-1760 / Hildenborough) (Desulfovibrio vulgaris) protein is Large ribosomal subunit protein bL33.